Reading from the N-terminus, the 666-residue chain is Nuclear distribution protein nudE homolog 1 (666 aa).

Positions 14 to 195 (EEEIAHYREK…KDQLARAIAT (182 aa)) form a coiled coil. 4 disordered regions span residues 40 to 64 (EFQQSSKELEDEMEQELAANDKQQA), 220 to 310 (DDIN…SGIP), 369 to 388 (KRVTSTTSTTSSTTTAPAPH), and 397 to 666 (DHNT…KVKK). Polar residues predominate over residues 251–274 (RSGTMSSIPVASPSTKRFSQQIPH). Composition is skewed to low complexity over residues 275-287 (SPSFSTLSRSTTS) and 372-383 (TSTTSTTSSTTT). The span at 400–410 (TTPTAQSQQFP) shows a compositional bias: polar residues. 3 stretches are compositionally biased toward low complexity: residues 449–465 (PTFRSSSTTSNRSLPSR), 473–485 (ASGSARSTTSGTA), and 536–554 (SATPTSGFSSFSASASTSN). Polar residues-rich tracts occupy residues 587–599 (RQSLSGAGPTPTT) and 614–638 (SSLSNMDKPSLMSASPGSRTPSGRP).

The protein belongs to the nudE family. In terms of assembly, self-associates. Interacts with PAC1.

The protein resides in the cytoplasm. It is found in the cytoskeleton. Functionally, required for nuclear migration. The sequence is that of Nuclear distribution protein nudE homolog 1 (NDE1) from Cryptococcus neoformans var. neoformans serotype D (strain B-3501A) (Filobasidiella neoformans).